Here is an 888-residue protein sequence, read N- to C-terminus: Alanine--tRNA ligase (888 aa).

Zn(2+) contacts are provided by H573, H577, C676, and H680.

The protein belongs to the class-II aminoacyl-tRNA synthetase family. Requires Zn(2+) as cofactor.

The protein localises to the cytoplasm. It carries out the reaction tRNA(Ala) + L-alanine + ATP = L-alanyl-tRNA(Ala) + AMP + diphosphate. In terms of biological role, catalyzes the attachment of alanine to tRNA(Ala) in a two-step reaction: alanine is first activated by ATP to form Ala-AMP and then transferred to the acceptor end of tRNA(Ala). Also edits incorrectly charged Ser-tRNA(Ala) and Gly-tRNA(Ala) via its editing domain. The protein is Alanine--tRNA ligase of Corynebacterium diphtheriae (strain ATCC 700971 / NCTC 13129 / Biotype gravis).